The primary structure comprises 241 residues: Venom nerve growth factor (241 aa).

An N-terminal signal peptide occupies residues 1-18 (MSMLCYTLIIAFLIGIWA). The propeptide occupies 19-122 (APKSEDNVPL…SLNRNIRAKR (104 aa)). Cystine bridges form between Cys-136–Cys-201, Cys-179–Cys-229, and Cys-189–Cys-231. Asn-145 is a glycosylation site (N-linked (GlcNAc...) asparagine).

The protein belongs to the NGF-beta family. Homodimer; non-covalently linked. Expressed by the venom gland.

The protein localises to the secreted. In terms of biological role, nerve growth factor is important for the development and maintenance of the sympathetic and sensory nervous systems. It stimulates division and differentiation of sympathetic and embryonic sensory neurons as well as basal forebrain cholinergic neurons in the brain. Its relevance in the snake venom is not clear. However, it has been shown to inhibit metalloproteinase-dependent proteolysis of platelet glycoprotein Ib alpha, suggesting a metalloproteinase inhibition to prevent metalloprotease autodigestion and/or protection against prey proteases. Binds a lipid between the two protein chains in the homodimer. The lipid-bound form promotes histamine relase from mouse mast cells, contrary to the lipid-free form. In Crotalus durissus terrificus (South American rattlesnake), this protein is Venom nerve growth factor.